A 1161-amino-acid chain; its full sequence is Voltage-gated inwardly rectifying potassium channel KCNH2 (1161 aa).

The Cytoplasmic segment spans residues 1–405 (MPVRRGHVAP…RIHRWTILHY (405 aa)). One can recognise a PAS domain in the interval 17 to 88 (TIIRKFEGQS…AAQIAQALLG (72 aa)). One can recognise a PAC domain in the interval 92–144 (RKVEIAFYRKDGSCFLCLVDVVPVKNEDGAVIMFILNFEVVMEKDMVGSPARD). The tract at residues 233–286 (ALVGSCSPPPPVSAPGPHPSLRAHSLNPDASGSSCSLARTRSRESCASVRRASS) is disordered. Residues serine 239 and serine 245 each carry the phosphoserine modification. The segment covering 239–250 (SPPPPVSAPGPH) has biased composition (pro residues). The span at 260–271 (PDASGSSCSLAR) shows a compositional bias: polar residues. Serine 285, serine 286, serine 322, and serine 353 each carry phosphoserine. Residues 406-426 (SPFKAVWDWLILLLVIYTAVF) traverse the membrane as a helical segment. At 427–452 (TPYSAAFLLKETEEGPPAPECGYACQ) the chain is on the extracellular side. A helical membrane pass occupies residues 453–473 (PLAVVDLIVDIMFIVDILINF). The Cytoplasmic segment spans residues 474-497 (RTTYVNANEEVVSHPGRIAVHYFK). A helical membrane pass occupies residues 498-518 (GWFLIDMVAAIPFDLLIFGSG). Topologically, residues 519–522 (SEEL) are extracellular. The chain crosses the membrane as a helical; Voltage-sensor span at residues 523-543 (IGLLKTARLLRLVRVARKLDR). Residues 544–549 (YSEYGA) lie on the Cytoplasmic side of the membrane. A helical transmembrane segment spans residues 550–570 (AVLLLLMCTFALIAHWLACIW). Residues 571–613 (YAIGNMEQPHMDSRIGWLHNLGDQMGKPYNSSGLGGPSIKDKY) are Extracellular-facing. Asparagine 600 carries N-linked (GlcNAc...) asparagine glycosylation. Positions 614 to 634 (VTGLYFTFSSLTSVGFGNVSP) form an intramembrane region, pore-forming. Positions 626–631 (SVGFGN) match the Selectivity filter motif. Over 635-640 (NTNSEK) the chain is Extracellular. Residues 641–661 (IFSICVMLIGSLMYASIFGNV) form a helical membrane-spanning segment. Residues 662 to 1161 (SAIIQRLYSG…LHRHGSDPGS (500 aa)) lie on the Cytoplasmic side of the membrane. The segment at 744–844 (PFRGATKDCL…IHRDDLLEVL (101 aa)) is cNMP-binding domain. Residues 872-985 (GSPGSTEWEG…TEDCEKSSDT (114 aa)) are disordered. A phosphoserine mark is found at serine 873 and serine 876. Basic residues predominate over residues 885–894 (RQRKRKLSFR). Low complexity predominate over residues 930–941 (GESPSSGPSSPE). Residues 962-972 (SPRPPGEPPGG) show a composition bias toward pro residues. Arginine 1016 bears the Omega-N-methylarginine mark. Residues 1037–1064 (RGDVESRLDALQRQLNRLETRLSADMAT) are a coiled coil. A disordered region spans residues 1121-1161 (ELPPGAPELPQEGPTRRLSLPGQLGALTSQPLHRHGSDPGS). Serine 1139 is modified (phosphoserine).

The protein belongs to the potassium channel family. H (Eag) (TC 1.A.1.20) subfamily. Kv11.1/KCNH2 sub-subfamily. As to quaternary structure, the potassium channel is probably composed of a homo- or heterotetrameric complex of pore-forming alpha subunits that can associate with modulating beta subunits. Interacts with DNAJB12 and DNAJB14; chaperones DNAJB12 and DNAJB14 promote tetramerization. Heteromultimer with KCNH6/ERG2 and KCNH7/ERG3. Interacts with ALG10B. Forms a stable complex with KCNE1 or KCNE2, and that this heteromultimerization regulates Inward rectifier potassium channel activity. Interacts with CANX. The core-glycosylated, but not the fully glycosylated form interacts with RNF207. Interacts with NDFIP1 and NDFIP2; this interaction decreases the cell membrane expression by targeting KCNH2, through interaction with NEDD4L, for the degradation through the multivesicular bodies (MVBs)-lysosomal pathway. Post-translationally, phosphorylated on serine and threonine residues. Phosphorylation by PKA inhibits ion conduction. As to expression, detected in heart, both in atrium and in left ventricle.

Its subcellular location is the cell membrane. The enzyme catalyses K(+)(in) = K(+)(out). Its function is as follows. Pore-forming (alpha) subunit of voltage-gated inwardly rectifying potassium channel. Characterized by unusual gating kinetics by producing relatively small outward currents during membrane depolarization and large inward currents during subsequent repolarization which reflect a rapid inactivation during depolarization and quick recovery from inactivation but slow deactivation (closing) during repolarization. Channel properties are modulated by cAMP and subunit assembly. Forms a stable complex with KCNE1 or KCNE2, and that this heteromultimerization regulates inward rectifier potassium channel activity. The sequence is that of Voltage-gated inwardly rectifying potassium channel KCNH2 from Oryctolagus cuniculus (Rabbit).